The following is a 348-amino-acid chain: Ion-translocating oxidoreductase complex subunit D (348 aa).

A run of 3 helical transmembrane segments spans residues 25–45, 68–88, and 124–144; these read ILAA…GTFI, PISP…IGVA, and AMAA…TWAA. Threonine 182 is modified (FMN phosphoryl threonine). 5 helical membrane passes run 211–231, 237–257, 263–283, 296–316, and 317–337; these read TGEG…FLLA, WHIS…GFGA, ASPL…FIAT, LLFG…GGYP, and DGVA…DYYI.

It belongs to the NqrB/RnfD family. The complex is composed of six subunits: RnfA, RnfB, RnfC, RnfD, RnfE and RnfG. Requires FMN as cofactor.

The protein resides in the cell inner membrane. Its function is as follows. Part of a membrane-bound complex that couples electron transfer with translocation of ions across the membrane. The sequence is that of Ion-translocating oxidoreductase complex subunit D from Shewanella amazonensis (strain ATCC BAA-1098 / SB2B).